We begin with the raw amino-acid sequence, 416 residues long: MPEKSLYEMAVEQFNRAASLMDLESDLAEVLRRPKRVLIVEFPVRMDDGHVEVFTGYRVQHNVARGPAKGGIRYHPDVTLDEVKALAFWMTWKTAVMNLPFGGGKGGVRVDPKKLSRNELERLSRRFFSEIQVIIGPYNDIPAPDVNTNADVMAWYMDTYSMNVGHTVLGIVTGKPVELGGSKGREEATGRGVKVCAGLAMDVLGIDPKKATVAVQGFGNVGQFAALLISQELGSKVVAVSDSRGGIYNPEGFDVEELIRYKKEHGTVVTYPKGERITNEELLELDVDILVPAALEGAIHAGNAERIKAKAVVEGANGPTTPEADEILSRRGILVVPDILANAGGVTVSYFEWVQDLQSFFWDLDQVRNALEKMMKGAFNDVMKVKEKYNVDMRTAAYILAIDRVAYATKKRGIYP.

Lys-105 is an active-site residue.

Belongs to the Glu/Leu/Phe/Val dehydrogenases family. In terms of assembly, homohexamer.

It catalyses the reaction L-glutamate + NAD(+) + H2O = 2-oxoglutarate + NH4(+) + NADH + H(+). It carries out the reaction L-glutamate + NADP(+) + H2O = 2-oxoglutarate + NH4(+) + NADPH + H(+). This is Glutamate dehydrogenase (gdhA) from Thermotoga maritima (strain ATCC 43589 / DSM 3109 / JCM 10099 / NBRC 100826 / MSB8).